Reading from the N-terminus, the 461-residue chain is Ribulose bisphosphate carboxylase (461 aa).

Asparagine 112 serves as a coordination point for substrate. The active-site Proton acceptor is the lysine 167. Position 169 (lysine 169) interacts with substrate. Mg(2+)-binding residues include lysine 192, aspartate 194, and glutamate 195. Lysine 192 carries the N6-carboxylysine modification. Catalysis depends on histidine 288, which acts as the Proton acceptor. 3 residues coordinate substrate: arginine 289, histidine 322, and serine 369.

It belongs to the RuBisCO large chain family. Type II subfamily. In terms of assembly, homodimer. Requires Mg(2+) as cofactor.

It carries out the reaction 2 (2R)-3-phosphoglycerate + 2 H(+) = D-ribulose 1,5-bisphosphate + CO2 + H2O. The catalysed reaction is D-ribulose 1,5-bisphosphate + O2 = 2-phosphoglycolate + (2R)-3-phosphoglycerate + 2 H(+). In terms of biological role, ruBisCO catalyzes two reactions: the carboxylation of D-ribulose 1,5-bisphosphate, the primary event in carbon dioxide fixation, as well as the oxidative fragmentation of the pentose substrate. Both reactions occur simultaneously and in competition at the same active site. In Rhodopseudomonas palustris (strain HaA2), this protein is Ribulose bisphosphate carboxylase.